Consider the following 153-residue polypeptide: Transcription antitermination protein NusB (153 aa).

It belongs to the NusB family.

In terms of biological role, involved in transcription antitermination. Required for transcription of ribosomal RNA (rRNA) genes. Binds specifically to the boxA antiterminator sequence of the ribosomal RNA (rrn) operons. In Beutenbergia cavernae (strain ATCC BAA-8 / DSM 12333 / CCUG 43141 / JCM 11478 / NBRC 16432 / NCIMB 13614 / HKI 0122), this protein is Transcription antitermination protein NusB.